The sequence spans 199 residues: MKAEQTPLSWDTPGLLAGVDEAGRGPLMGPVVAAAVILDELNPIKGLADSKKLTPQRREALYDEIRAKALCCSIALATAEEIDRLNILQATMLAMRRAVESLRLKPNKVLVDGNRLPTLAIVSEAVIGGDAIVPAISAASILAKVYRDRWCAEFHLEYPQYGFASHKGYSTAEHLAALREHGACPQHRRSFAPVAEVLR.

One can recognise an RNase H type-2 domain in the interval 14–199 (GLLAGVDEAG…SFAPVAEVLR (186 aa)). 3 residues coordinate a divalent metal cation: Asp20, Glu21, and Asp112.

The protein belongs to the RNase HII family. It depends on Mn(2+) as a cofactor. Requires Mg(2+) as cofactor.

It localises to the cytoplasm. It carries out the reaction Endonucleolytic cleavage to 5'-phosphomonoester.. Endonuclease that specifically degrades the RNA of RNA-DNA hybrids. In Polaromonas sp. (strain JS666 / ATCC BAA-500), this protein is Ribonuclease HII.